The chain runs to 181 residues: Ribulose bisphosphate carboxylase small subunit, chloroplastic 1 (181 aa).

The transit peptide at 1-57 directs the protein to the chloroplast; it reads MASSIVSSAAAATRSNVAQASMVAPFTGLKSAASFPVTKKNNNVDITSLASNGGRVR.

The protein belongs to the RuBisCO small chain family. As to quaternary structure, (Microbial infection) Binds to tobamovirus movement protein; this interaction seems required for viral systemic movement. In terms of assembly, heterohexadecamer of 8 large and 8 small subunits.

It is found in the plastid. The protein resides in the chloroplast. Its subcellular location is the cell junction. The protein localises to the plasmodesma. In terms of biological role, ruBisCO catalyzes two reactions: the carboxylation of D-ribulose 1,5-bisphosphate, the primary event in carbon dioxide fixation, as well as the oxidative fragmentation of the pentose substrate. Both reactions occur simultaneously and in competition at the same active site. Although the small subunit is not catalytic it is essential for maximal activity. Involved in antiviral defenses. The chain is Ribulose bisphosphate carboxylase small subunit, chloroplastic 1 from Solanum lycopersicum (Tomato).